Reading from the N-terminus, the 230-residue chain is 2,3-bisphosphoglycerate-dependent phosphoglycerate mutase (230 aa).

Substrate is bound by residues Arg-8–Asn-15, Thr-21–Gly-22, Arg-60, Glu-87–Tyr-90, Lys-98, Arg-114–Arg-115, and Gly-183–Asn-184. His-9 acts as the Tele-phosphohistidine intermediate in catalysis. The Proton donor/acceptor role is filled by Glu-87.

This sequence belongs to the phosphoglycerate mutase family. BPG-dependent PGAM subfamily.

The catalysed reaction is (2R)-2-phosphoglycerate = (2R)-3-phosphoglycerate. It participates in carbohydrate degradation; glycolysis; pyruvate from D-glyceraldehyde 3-phosphate: step 3/5. Catalyzes the interconversion of 2-phosphoglycerate and 3-phosphoglycerate. This is 2,3-bisphosphoglycerate-dependent phosphoglycerate mutase from Streptococcus uberis (strain ATCC BAA-854 / 0140J).